Here is a 72-residue protein sequence, read N- to C-terminus: Large ribosomal subunit protein uL29 (72 aa).

This sequence belongs to the universal ribosomal protein uL29 family.

The polypeptide is Large ribosomal subunit protein uL29 (rpmC) (Treponema pallidum (strain Nichols)).